Here is a 475-residue protein sequence, read N- to C-terminus: Chemotaxis protein MotD (475 aa).

3 disordered regions span residues 1–175, 195–243, and 408–475; these read MRPL…PVGG, LQPE…SEPD, and GDSA…HVYM. The segment covering 9-22 has biased composition (polar residues); the sequence is RTSAASRPAQSLSV. Low complexity predominate over residues 79–100; it reads ADVPASMADAASPDARPASERA. Positions 143 to 155 are enriched in basic and acidic residues; that stretch reads HSRETVHALRDAI. Positions 408–417 are enriched in gly residues; it reads GDSASGGGGQ. Over residues 427–449 the composition is skewed to basic and acidic residues; the sequence is EGRERAGDDGQGRQPRDGGRAAT.

The protein localises to the cytoplasm. Functionally, required for the rotation of the flagellar motor. Has a positive effect as flagellar rotation increases when an excess of motd is present. This Rhizobium meliloti (Ensifer meliloti) protein is Chemotaxis protein MotD (motD).